We begin with the raw amino-acid sequence, 677 residues long: Methionine--tRNA ligase (677 aa).

Residues 15–25 carry the 'HIGH' region motif; the sequence is PYANGSIHLGH. Positions 146, 149, 159, and 162 each coordinate Zn(2+). The 'KMSKS' region motif lies at 333 to 337; that stretch reads KMSKS. Position 336 (Lys336) interacts with ATP. The tRNA-binding domain maps to 575–677; that stretch reads DFAKIDLRVA…DGAKPGQQVK (103 aa).

It belongs to the class-I aminoacyl-tRNA synthetase family. MetG type 1 subfamily. As to quaternary structure, homodimer. Zn(2+) is required as a cofactor.

The protein resides in the cytoplasm. It carries out the reaction tRNA(Met) + L-methionine + ATP = L-methionyl-tRNA(Met) + AMP + diphosphate. Its function is as follows. Is required not only for elongation of protein synthesis but also for the initiation of all mRNA translation through initiator tRNA(fMet) aminoacylation. The protein is Methionine--tRNA ligase of Salmonella typhi.